A 237-amino-acid polypeptide reads, in one-letter code: Putative N-acetylmannosamine-6-phosphate 2-epimerase (237 aa).

Belongs to the NanE family.

The enzyme catalyses an N-acyl-D-glucosamine 6-phosphate = an N-acyl-D-mannosamine 6-phosphate. It functions in the pathway amino-sugar metabolism; N-acetylneuraminate degradation; D-fructose 6-phosphate from N-acetylneuraminate: step 3/5. In terms of biological role, converts N-acetylmannosamine-6-phosphate (ManNAc-6-P) to N-acetylglucosamine-6-phosphate (GlcNAc-6-P). The polypeptide is Putative N-acetylmannosamine-6-phosphate 2-epimerase (Listeria monocytogenes serotype 4a (strain HCC23)).